Here is a 354-residue protein sequence, read N- to C-terminus: Glutamine synthetase (354 aa).

The region spanning 22–101 is the GS beta-grasp domain; sequence IQAEYVWIDG…VLAETYNNDG (80 aa). The GS catalytic domain occupies 108–354; it reads HRHHAKKVFD…IIAETTILDK (247 aa).

The protein belongs to the glutamine synthetase family. In terms of assembly, homooctamer.

It localises to the cytoplasm. The enzyme catalyses L-glutamate + NH4(+) + ATP = L-glutamine + ADP + phosphate + H(+). The polypeptide is Glutamine synthetase (glnA) (Agaricus bisporus (White button mushroom)).